The primary structure comprises 337 residues: DNA-directed RNA polymerase subunit alpha (337 aa).

The segment at methionine 1–glutamate 233 is alpha N-terminal domain (alpha-NTD). The alpha C-terminal domain (alpha-CTD) stretch occupies residues glycine 266–isoleucine 337.

The protein belongs to the RNA polymerase alpha chain family. In plastids the minimal PEP RNA polymerase catalytic core is composed of four subunits: alpha, beta, beta', and beta''. When a (nuclear-encoded) sigma factor is associated with the core the holoenzyme is formed, which can initiate transcription.

It is found in the plastid. It localises to the chloroplast. The enzyme catalyses RNA(n) + a ribonucleoside 5'-triphosphate = RNA(n+1) + diphosphate. Its function is as follows. DNA-dependent RNA polymerase catalyzes the transcription of DNA into RNA using the four ribonucleoside triphosphates as substrates. In Dioscorea elephantipes (Elephant's foot yam), this protein is DNA-directed RNA polymerase subunit alpha.